The sequence spans 860 residues: Valine--tRNA ligase (860 aa).

The 'HIGH' region signature appears at 43 to 53 (PTVSGALHVGH). The interval 469–491 (LPVDPSSDAPTGYQESQRNQPGG) is disordered. A 'KMSKS' region motif is present at residues 574 to 578 (KMSKS). Residue K577 coordinates ATP.

Belongs to the class-I aminoacyl-tRNA synthetase family. ValS type 2 subfamily. Monomer.

It is found in the cytoplasm. It carries out the reaction tRNA(Val) + L-valine + ATP = L-valyl-tRNA(Val) + AMP + diphosphate. Its function is as follows. Catalyzes the attachment of valine to tRNA(Val). As ValRS can inadvertently accommodate and process structurally similar amino acids such as threonine, to avoid such errors, it has a 'posttransfer' editing activity that hydrolyzes mischarged Thr-tRNA(Val) in a tRNA-dependent manner. The protein is Valine--tRNA ligase of Salinispora tropica (strain ATCC BAA-916 / DSM 44818 / JCM 13857 / NBRC 105044 / CNB-440).